The chain runs to 185 residues: Ribosome-recycling factor (185 aa).

It belongs to the RRF family.

It localises to the cytoplasm. Functionally, responsible for the release of ribosomes from messenger RNA at the termination of protein biosynthesis. May increase the efficiency of translation by recycling ribosomes from one round of translation to another. This Sodalis glossinidius (strain morsitans) protein is Ribosome-recycling factor.